The following is a 267-amino-acid chain: Glucosamine-6-phosphate deaminase (267 aa).

The active-site Proton acceptor; for enolization step is aspartate 72. Aspartate 141 functions as the For ring-opening step in the catalytic mechanism. Histidine 143 serves as the catalytic Proton acceptor; for ring-opening step. Glutamate 148 acts as the For ring-opening step in catalysis.

It belongs to the glucosamine/galactosamine-6-phosphate isomerase family. NagB subfamily. In terms of assembly, homohexamer.

It catalyses the reaction alpha-D-glucosamine 6-phosphate + H2O = beta-D-fructose 6-phosphate + NH4(+). Its pathway is amino-sugar metabolism; N-acetylneuraminate degradation; D-fructose 6-phosphate from N-acetylneuraminate: step 5/5. With respect to regulation, allosterically activated by N-acetylglucosamine 6-phosphate (GlcNAc6P). In terms of biological role, catalyzes the reversible isomerization-deamination of glucosamine 6-phosphate (GlcN6P) to form fructose 6-phosphate (Fru6P) and ammonium ion. The protein is Glucosamine-6-phosphate deaminase of Mannheimia succiniciproducens (strain KCTC 0769BP / MBEL55E).